We begin with the raw amino-acid sequence, 307 residues long: Cytochrome f (307 aa).

The signal sequence occupies residues 1–24 (MKKNLFLVSVFASLFVGTANNALA). Heme-binding residues include Tyr25, Cys45, Cys48, and His49. Residues 273–293 (LQGLVIFLGFVLIAQVFLVLK) traverse the membrane as a helical segment.

The protein belongs to the cytochrome f family. The 4 large subunits of the cytochrome b6-f complex are cytochrome b6, subunit IV (17 kDa polypeptide, petD), cytochrome f and the Rieske protein, while the 4 small subunits are PetG, PetL, PetM and PetN. The complex functions as a dimer. Heme serves as cofactor.

The protein localises to the plastid. It is found in the chloroplast thylakoid membrane. Its function is as follows. Component of the cytochrome b6-f complex, which mediates electron transfer between photosystem II (PSII) and photosystem I (PSI), cyclic electron flow around PSI, and state transitions. In Ostreococcus tauri, this protein is Cytochrome f.